A 116-amino-acid chain; its full sequence is NADH-ubiquinone oxidoreductase chain 3 (116 aa).

Transmembrane regions (helical) follow at residues 3-23, 56-76, and 87-107; these read LIMT…TVSF, FFLV…LLPL, and GTFF…IYEW.

Belongs to the complex I subunit 3 family.

The protein resides in the mitochondrion membrane. It carries out the reaction a ubiquinone + NADH + 5 H(+)(in) = a ubiquinol + NAD(+) + 4 H(+)(out). Core subunit of the mitochondrial membrane respiratory chain NADH dehydrogenase (Complex I) that is believed to belong to the minimal assembly required for catalysis. Complex I functions in the transfer of electrons from NADH to the respiratory chain. The immediate electron acceptor for the enzyme is believed to be ubiquinone. The polypeptide is NADH-ubiquinone oxidoreductase chain 3 (MT-ND3) (Carassius auratus (Goldfish)).